The chain runs to 408 residues: LL-diaminopimelate aminotransferase (408 aa).

The substrate site is built by tyrosine 15 and glycine 42. Pyridoxal 5'-phosphate is bound by residues tyrosine 72, 108-109 (AK), tyrosine 132, asparagine 186, tyrosine 217, and 245-247 (SFS). Substrate-binding residues include lysine 109, tyrosine 132, and asparagine 186. Lysine 248 carries the post-translational modification N6-(pyridoxal phosphate)lysine. Positions 256 and 291 each coordinate pyridoxal 5'-phosphate. Positions 291 and 386 each coordinate substrate.

It belongs to the class-I pyridoxal-phosphate-dependent aminotransferase family. LL-diaminopimelate aminotransferase subfamily. As to quaternary structure, homodimer. Requires pyridoxal 5'-phosphate as cofactor.

It carries out the reaction (2S,6S)-2,6-diaminopimelate + 2-oxoglutarate = (S)-2,3,4,5-tetrahydrodipicolinate + L-glutamate + H2O + H(+). It participates in amino-acid biosynthesis; L-lysine biosynthesis via DAP pathway; LL-2,6-diaminopimelate from (S)-tetrahydrodipicolinate (aminotransferase route): step 1/1. Its function is as follows. Involved in the synthesis of meso-diaminopimelate (m-DAP or DL-DAP), required for both lysine and peptidoglycan biosynthesis. Catalyzes the direct conversion of tetrahydrodipicolinate to LL-diaminopimelate. In Desulfotalea psychrophila (strain LSv54 / DSM 12343), this protein is LL-diaminopimelate aminotransferase.